We begin with the raw amino-acid sequence, 328 residues long: Putative thiosulfate sulfurtransferase mpst-1 (328 aa).

2 consecutive Rhodanese domains span residues 22–162 (NKEG…EVST) and 202–320 (KTSE…KKIS). Cysteine 278 functions as the Cysteine persulfide intermediate in the catalytic mechanism.

The enzyme catalyses thiosulfate + hydrogen cyanide = thiocyanate + sulfite + 2 H(+). This chain is Putative thiosulfate sulfurtransferase mpst-1 (mpst-1), found in Caenorhabditis elegans.